The following is a 258-amino-acid chain: Transmembrane O-methyltransferase homolog (258 aa).

S-adenosyl-L-methionine-binding positions include glutamate 104, 106–107 (GT), serine 112, glutamate 130, and serine 160.

Belongs to the class I-like SAM-binding methyltransferase superfamily. Cation-dependent O-methyltransferase family. In terms of assembly, interacts with LHFPL5, PCDH15, TMC1, TMC2 and TMIE. Interacts directly with TMC1. The interaction of TOMT with TMC1 and TMC2 is required for the transportation of TMC1/2 into the stereocilia of hair cells.

The protein resides in the cytoplasm. Its subcellular location is the endoplasmic reticulum. It carries out the reaction a catechol + S-adenosyl-L-methionine = a guaiacol + S-adenosyl-L-homocysteine + H(+). Its function is as follows. Catalyzes the O-methylation, and thereby the inactivation, of catecholamine neurotransmitters and catechol hormones. Required for auditory function. Component of the cochlear hair cell's mechanotransduction (MET) machinery. Involved in the assembly of the asymmetric tip-link MET complex. Required for transportation of TMC1 and TMC2 proteins into the mechanically sensitive stereocilia of the hair cells. The function in MET is independent of the enzymatic activity. The chain is Transmembrane O-methyltransferase homolog from Rattus norvegicus (Rat).